A 234-amino-acid chain; its full sequence is Orotidine 5'-phosphate decarboxylase (234 aa).

Residues D10, K32, 59–68 (DLKFHDIPNT), T119, R180, Q189, G209, and R210 each bind substrate. K61 serves as the catalytic Proton donor.

Belongs to the OMP decarboxylase family. Type 1 subfamily. Homodimer.

The enzyme catalyses orotidine 5'-phosphate + H(+) = UMP + CO2. It participates in pyrimidine metabolism; UMP biosynthesis via de novo pathway; UMP from orotate: step 2/2. Catalyzes the decarboxylation of orotidine 5'-monophosphate (OMP) to uridine 5'-monophosphate (UMP). The sequence is that of Orotidine 5'-phosphate decarboxylase from Mannheimia succiniciproducens (strain KCTC 0769BP / MBEL55E).